Consider the following 275-residue polypeptide: Large ribosomal subunit protein uL2 (275 aa).

The disordered stretch occupies residues 224 to 275 (AMNPVDHPHGGGEGKAPIGHPGPLTPWGKPALGYKTRKKGKASDKFIVKRRK). Positions 264–275 (KASDKFIVKRRK) are enriched in basic and acidic residues.

It belongs to the universal ribosomal protein uL2 family. Part of the 50S ribosomal subunit. Forms a bridge to the 30S subunit in the 70S ribosome.

Its function is as follows. One of the primary rRNA binding proteins. Required for association of the 30S and 50S subunits to form the 70S ribosome, for tRNA binding and peptide bond formation. It has been suggested to have peptidyltransferase activity; this is somewhat controversial. Makes several contacts with the 16S rRNA in the 70S ribosome. The sequence is that of Large ribosomal subunit protein uL2 from Caldanaerobacter subterraneus subsp. tengcongensis (strain DSM 15242 / JCM 11007 / NBRC 100824 / MB4) (Thermoanaerobacter tengcongensis).